The following is a 482-amino-acid chain: Serine decarboxylase 1 (482 aa).

Residues 36 to 55 (EVESPPRPAEEEGEGSPTRR) are disordered. Position 200 (histidine 200) interacts with substrate. Lysine 312 carries the post-translational modification N6-(pyridoxal phosphate)lysine.

It belongs to the group II decarboxylase family. Pyridoxal 5'-phosphate serves as cofactor.

The catalysed reaction is L-serine + H(+) = ethanolamine + CO2. Its function is as follows. Catalyzes the biosynthesis of ethanolamine from serine. Decarboxylation of free serine is the major source of ethanolamine production in plants and ethanolamine metabolism is crucial for the synthesis of choline, phosphatidylethanolamine (PE) and phosphatidylcholine (PC), and thus for plant growth. The protein is Serine decarboxylase 1 (SDC1) of Oryza sativa subsp. japonica (Rice).